The chain runs to 324 residues: Adducin-related protein C1289.14 (324 aa).

It belongs to the aldolase class II family. Adducin subfamily.

This is Adducin-related protein C1289.14 from Schizosaccharomyces pombe (strain 972 / ATCC 24843) (Fission yeast).